Consider the following 326-residue polypeptide: tRNA-modifying protein YgfZ (326 aa).

Folate-binding residues include Trp-27 and Trp-189.

Belongs to the tRNA-modifying YgfZ family.

It localises to the cytoplasm. In terms of biological role, folate-binding protein involved in regulating the level of ATP-DnaA and in the modification of some tRNAs. It is probably a key factor in regulatory networks that act via tRNA modification, such as initiation of chromosomal replication. The chain is tRNA-modifying protein YgfZ from Escherichia coli O6:K15:H31 (strain 536 / UPEC).